The following is a 576-amino-acid chain: Sulfite reductase [NADPH] hemoprotein beta-component (576 aa).

[4Fe-4S] cluster contacts are provided by Cys435, Cys441, Cys480, and Cys484. Cys484 contacts siroheme.

It belongs to the nitrite and sulfite reductase 4Fe-4S domain family. As to quaternary structure, alpha(8)-beta(8). The alpha component is a flavoprotein, the beta component is a hemoprotein. Requires siroheme as cofactor. [4Fe-4S] cluster is required as a cofactor.

It carries out the reaction hydrogen sulfide + 3 NADP(+) + 3 H2O = sulfite + 3 NADPH + 4 H(+). The protein operates within sulfur metabolism; hydrogen sulfide biosynthesis; hydrogen sulfide from sulfite (NADPH route): step 1/1. In terms of biological role, component of the sulfite reductase complex that catalyzes the 6-electron reduction of sulfite to sulfide. This is one of several activities required for the biosynthesis of L-cysteine from sulfate. The protein is Sulfite reductase [NADPH] hemoprotein beta-component of Proteus mirabilis (strain HI4320).